The sequence spans 506 residues: Probable alpha-L-arabinofuranosidase B (506 aa).

Positions 1–26 are cleaved as a signal peptide; sequence MLSQPSRERAFVLALGLVVSSSLAAA. Residues 27-343 form a catalytic region; the sequence is APCDIYSSGG…ADIVAANYAV (317 aa). 3 disulfides stabilise this stretch: C29/C39, C89/C94, and C184/C185. D227 contributes to the substrate binding site. Catalysis depends on E229, which acts as the Nucleophile. N230 provides a ligand contact to substrate. The N-linked (GlcNAc...) asparagine glycan is linked to N285. Position 304 (G304) interacts with substrate. D305 (proton donor) is an active-site residue. Residues 344–506 form an ABD region; it reads TSLTSGPALT…VSWVISSGFA (163 aa). An intrachain disulfide couples C409 to C447. Substrate contacts are provided by H424, N426, F427, D443, H471, L476, and D496.

It belongs to the glycosyl hydrolase 54 family.

It localises to the secreted. The catalysed reaction is Hydrolysis of terminal non-reducing alpha-L-arabinofuranoside residues in alpha-L-arabinosides.. It participates in glycan metabolism; L-arabinan degradation. Its function is as follows. Alpha-L-arabinofuranosidase involved in the degradation of arabinoxylan, a major component of plant hemicellulose. Able to hydrolyze 1,5-, 1,3- and 1,2-alpha-linkages not only in L-arabinofuranosyl oligosaccharides, but also in polysaccharides containing terminal non-reducing L-arabinofuranoses in side chains, like L-arabinan, arabinogalactan and arabinoxylan. This Aspergillus clavatus (strain ATCC 1007 / CBS 513.65 / DSM 816 / NCTC 3887 / NRRL 1 / QM 1276 / 107) protein is Probable alpha-L-arabinofuranosidase B (abfB).